The sequence spans 452 residues: MQRRIMGIETEFGVTCTFHGHRRLSPDEVARYLFRRVVSWGRSSNVFLQNGARLYLDVGSHPEYATAECDSLIQLINHDRAGELVLEDLLVDAEQRLSDEGIGGDIYLFKNNTDSAGNSYGCHENYLVVRAGEFSRISDVLLPFLVTRQLICGAGKVLQTPKAATFCLSQRAEHIWEGVSSATTRSRPIINTRDEPHADAEKYRRLHVIVGDSNMSEMTTLLKVGSAALVLEMIEAGVVFRDFALDNPIRAIREASHDPTGRRPVRLAGGRQASALDIQREYHARAVEHMTNRRPDPEMDMVVDLWGRMLDAVERDDFSKVDTEVDWVIKRKLFQRYQDKYSMELSDPKIAQLDLAFHDIKRGRGVFDVLSRKGLVTRATTDEAIATAVNEPPQTTRAKLRGDFISAAQKAGRDFTVDWVHLKLNDQAQRTVLCKDPFRSVDERVDRLIASM.

Residue glutamate 9 participates in Mg(2+) binding. Residue arginine 53 coordinates ATP. Tyrosine 55 serves as a coordination point for Mg(2+). Aspartate 57 acts as the Proton acceptor in catalysis. Glutamate 63 is a binding site for Mg(2+). ATP-binding residues include threonine 66 and tryptophan 419.

Belongs to the Pup ligase/Pup deamidase family. Pup-conjugating enzyme subfamily.

The catalysed reaction is ATP + [prokaryotic ubiquitin-like protein]-L-glutamate + [protein]-L-lysine = ADP + phosphate + N(6)-([prokaryotic ubiquitin-like protein]-gamma-L-glutamyl)-[protein]-L-lysine.. Its pathway is protein degradation; proteasomal Pup-dependent pathway. It participates in protein modification; protein pupylation. Catalyzes the covalent attachment of the prokaryotic ubiquitin-like protein modifier Pup to the proteasomal substrate proteins, thereby targeting them for proteasomal degradation. This tagging system is termed pupylation. The ligation reaction involves the side-chain carboxylate of the C-terminal glutamate of Pup and the side-chain amino group of a substrate lysine. This Gordonia bronchialis (strain ATCC 25592 / DSM 43247 / BCRC 13721 / JCM 3198 / KCTC 3076 / NBRC 16047 / NCTC 10667) (Rhodococcus bronchialis) protein is Pup--protein ligase.